We begin with the raw amino-acid sequence, 525 residues long: GMP synthase [glutamine-hydrolyzing] (525 aa).

A Glutamine amidotransferase type-1 domain is found at 9-207; the sequence is RILILDFGSQ…VKEICHCEAL (199 aa). The active-site Nucleophile is Cys-86. Active-site residues include His-181 and Glu-183. The GMPS ATP-PPase domain maps to 208-400; sequence WTPATIIEDA…LGLPYNMLYR (193 aa). Residue 235 to 241 participates in ATP binding; that stretch reads SGGVDSS.

Homodimer.

It carries out the reaction XMP + L-glutamine + ATP + H2O = GMP + L-glutamate + AMP + diphosphate + 2 H(+). It functions in the pathway purine metabolism; GMP biosynthesis; GMP from XMP (L-Gln route): step 1/1. Its function is as follows. Catalyzes the synthesis of GMP from XMP. The polypeptide is GMP synthase [glutamine-hydrolyzing] (Tolumonas auensis (strain DSM 9187 / NBRC 110442 / TA 4)).